The following is a 98-amino-acid chain: NADH-ubiquinone oxidoreductase chain 4L (98 aa).

3 helical membrane-spanning segments follow: residues 1 to 21 (MSMV…GLLM), 29 to 49 (SLLC…VTIL), and 61 to 81 (IILL…LVMV).

Belongs to the complex I subunit 4L family. As to quaternary structure, core subunit of respiratory chain NADH dehydrogenase (Complex I) which is composed of 45 different subunits.

It is found in the mitochondrion inner membrane. It carries out the reaction a ubiquinone + NADH + 5 H(+)(in) = a ubiquinol + NAD(+) + 4 H(+)(out). Core subunit of the mitochondrial membrane respiratory chain NADH dehydrogenase (Complex I) which catalyzes electron transfer from NADH through the respiratory chain, using ubiquinone as an electron acceptor. Part of the enzyme membrane arm which is embedded in the lipid bilayer and involved in proton translocation. The protein is NADH-ubiquinone oxidoreductase chain 4L (MT-ND4L) of Phoca fasciata (Ribbon seal).